Reading from the N-terminus, the 1088-residue chain is RNA-directed RNA polymerase (1088 aa).

The region spanning 501–687 (LSYGDVTRFL…AKRYIAGGKI (187 aa)) is the RdRp catalytic domain.

The protein belongs to the reoviridae RNA-directed RNA polymerase family. As to quaternary structure, interacts with VP3 (Potential). Interacts with VP2; this interaction activates VP1. Interacts with NSP5; this interaction is probably necessary for the formation of functional virus factories. Interacts with NSP2; this interaction is weak. It depends on Mg(2+) as a cofactor.

Its subcellular location is the virion. It catalyses the reaction RNA(n) + a ribonucleoside 5'-triphosphate = RNA(n+1) + diphosphate. Functionally, RNA-directed RNA polymerase that is involved in both transcription and genome replication. Together with VP3 capping enzyme, forms an enzyme complex positioned near the channels situated at each of the five-fold vertices of the core. Following infection, the outermost layer of the virus is lost, leaving a double-layered particle (DLP) made up of the core and VP6 shell. VP1 then catalyzes the transcription of fully conservative plus-strand genomic RNAs that are extruded through the DLP's channels into the cytoplasm where they function as mRNAs for translation of viral proteins. One copy of each of the viral (+)RNAs is also recruited during core assembly, together with newly synthesized polymerase complexes and VP2. The polymerase of these novo-formed particles catalyzes the synthesis of complementary minus-strands leading to dsRNA formation. To do so, the polymerase specifically recognizes and binds 4 bases 5'-UGUG-3' in the conserved 3'-sequence of plus-strand RNA templates. VP2 presumably activates the autoinhibited VP1-RNA complex to coordinate packaging and genome replication. Once dsRNA synthesis is complete, the polymerase switches to the transcriptional mode, thus providing secondary transcription. The protein is RNA-directed RNA polymerase of Homo sapiens (Human).